Reading from the N-terminus, the 156-residue chain is Small ribosomal subunit protein uS7 (156 aa).

The protein belongs to the universal ribosomal protein uS7 family. As to quaternary structure, part of the 30S ribosomal subunit. Contacts proteins S9 and S11.

In terms of biological role, one of the primary rRNA binding proteins, it binds directly to 16S rRNA where it nucleates assembly of the head domain of the 30S subunit. Is located at the subunit interface close to the decoding center, probably blocks exit of the E-site tRNA. This Mycoplasmopsis agalactiae (strain NCTC 10123 / CIP 59.7 / PG2) (Mycoplasma agalactiae) protein is Small ribosomal subunit protein uS7.